The sequence spans 497 residues: Meiosis-specific serine/threonine-protein kinase MEK1 (497 aa).

The region spanning V47 to L102 is the FHA domain. The Protein kinase domain occupies E162–I444. Residues V168 to V176 and K199 contribute to the ATP site. The active-site Proton acceptor is the D290.

The protein belongs to the protein kinase superfamily. CAMK Ser/Thr protein kinase family. CHEK2 subfamily.

The catalysed reaction is L-seryl-[protein] + ATP = O-phospho-L-seryl-[protein] + ADP + H(+). The enzyme catalyses L-threonyl-[protein] + ATP = O-phospho-L-threonyl-[protein] + ADP + H(+). Functionally, probable protein kinase required for meiotic recombination. The chain is Meiosis-specific serine/threonine-protein kinase MEK1 (MEK1) from Saccharomyces cerevisiae (strain ATCC 204508 / S288c) (Baker's yeast).